Consider the following 191-residue polypeptide: Thymidine kinase (191 aa).

Residues 15-22 and 88-91 each bind ATP; these read GPMYSGKT and DEAQ. E89 serves as the catalytic Proton acceptor. The Zn(2+) site is built by C145, C148, C183, and C186.

It belongs to the thymidine kinase family. Homotetramer.

It localises to the cytoplasm. It catalyses the reaction thymidine + ATP = dTMP + ADP + H(+). This Clostridium botulinum (strain Loch Maree / Type A3) protein is Thymidine kinase.